The primary structure comprises 399 residues: Phosphoglycerate kinase (399 aa).

Residues Asp20–Asn22, Arg35, His58–Arg61, Arg117, and Arg154 each bind substrate. ATP is bound by residues Lys204, Gly295, Glu326, and Gly355 to Ser358.

It belongs to the phosphoglycerate kinase family. Monomer.

It localises to the cytoplasm. The catalysed reaction is (2R)-3-phosphoglycerate + ATP = (2R)-3-phospho-glyceroyl phosphate + ADP. It functions in the pathway carbohydrate degradation; glycolysis; pyruvate from D-glyceraldehyde 3-phosphate: step 2/5. This is Phosphoglycerate kinase from Beutenbergia cavernae (strain ATCC BAA-8 / DSM 12333 / CCUG 43141 / JCM 11478 / NBRC 16432 / NCIMB 13614 / HKI 0122).